The following is a 215-amino-acid chain: ER lumen protein-retaining receptor B (215 aa).

Helical transmembrane passes span 6–26, 55–77, 98–118, 120–140, 149–169, and 178–198; these read LAGDMTHLASVLVLLLKIHTI, FVSLYNTSMKLVFLGSSFSIVWY, WFLVLPCFLLALLIHEKFTFL, VLWTSSLYLEAVAILPQLVLL, LTGQYIFLLGGYRGLYILNWI, and FVHWITWIAGFVQTLLYADFF.

It belongs to the ERD2 family.

It localises to the golgi apparatus membrane. The protein localises to the endoplasmic reticulum membrane. In terms of biological role, determines the specificity of the luminal endoplasmic reticulum protein retention system. Required for the retro-transport of calreticulin-3 (CRT3) from the Golgi to the ER. Specifically required for elongation factor Tu receptor (EFR) function in response to the pathogen-associated molecular pattern (PAMP) elf18. The polypeptide is ER lumen protein-retaining receptor B (ERD2B) (Arabidopsis thaliana (Mouse-ear cress)).